Reading from the N-terminus, the 246-residue chain is UDP-N-acetyl-D-mannosaminuronic acid transferase (246 aa).

The protein belongs to the glycosyltransferase 26 family.

It carries out the reaction UDP-N-acetyl-alpha-D-mannosaminouronate + N-acetyl-alpha-D-glucosaminyl-di-trans,octa-cis-undecaprenyl diphosphate = beta-D-ManNAcA-(1-&gt;4)-alpha-D-GlcNAc-di-trans,octa-cis-undecaprenyl diphosphate + UDP + H(+). Its pathway is bacterial outer membrane biogenesis; enterobacterial common antigen biosynthesis. In terms of biological role, catalyzes the synthesis of Und-PP-GlcNAc-ManNAcA (Lipid II), the second lipid-linked intermediate involved in enterobacterial common antigen (ECA) synthesis. This is UDP-N-acetyl-D-mannosaminuronic acid transferase from Salmonella agona (strain SL483).